Reading from the N-terminus, the 304-residue chain is 15-cis-phytoene synthase (304 aa).

The protein belongs to the phytoene/squalene synthase family. ATP serves as cofactor. Mn(2+) is required as a cofactor. The cofactor is Mg(2+).

The enzyme catalyses 2 (2E,6E,10E)-geranylgeranyl diphosphate = 15-cis-phytoene + 2 diphosphate. The protein operates within carotenoid biosynthesis; astaxanthin biosynthesis. It functions in the pathway carotenoid biosynthesis; phytoene biosynthesis. In terms of biological role, involved in the biosynthesis of carotenoids for the production of astaxanthin. Catalyzes the condensation of two molecules of geranylgeranyl diphosphate (GGPP) to give prephytoene diphosphate (PPPP) and the subsequent rearrangement of the cyclopropylcarbinyl intermediate to yield 15-cis phytoene. In Paracoccus sp. (strain N81106 / MBIC 01143) (Agrobacterium aurantiacum), this protein is 15-cis-phytoene synthase (crtB).